The sequence spans 683 residues: DNA ligase (683 aa).

NAD(+) is bound by residues 36–40 (DAEYD), 85–86 (SL), and glutamate 119. Residue lysine 121 is the N6-AMP-lysine intermediate of the active site. The NAD(+) site is built by arginine 142, glutamate 179, lysine 295, and lysine 319. Cysteine 413, cysteine 416, cysteine 431, and cysteine 437 together coordinate Zn(2+). One can recognise a BRCT domain in the interval 596 to 683 (TETLPLSGQT…EHQAHLGGEA (88 aa)).

The protein belongs to the NAD-dependent DNA ligase family. LigA subfamily. Mg(2+) is required as a cofactor. Requires Mn(2+) as cofactor.

The catalysed reaction is NAD(+) + (deoxyribonucleotide)n-3'-hydroxyl + 5'-phospho-(deoxyribonucleotide)m = (deoxyribonucleotide)n+m + AMP + beta-nicotinamide D-nucleotide.. Its function is as follows. DNA ligase that catalyzes the formation of phosphodiester linkages between 5'-phosphoryl and 3'-hydroxyl groups in double-stranded DNA using NAD as a coenzyme and as the energy source for the reaction. It is essential for DNA replication and repair of damaged DNA. This Hahella chejuensis (strain KCTC 2396) protein is DNA ligase.